Here is a 544-residue protein sequence, read N- to C-terminus: MTCKNTRRLYQIITTFLRYGIDEIIPDIPLTRHARLGRKALFWVRNQHKDQPFGVRLRLALQELGPVWIKLGQMLSTRRDLFEPELAEQLALLQDSVEPFDGKSARQIIEQALGGSLETWFDEFDEQALASASIAQVHTAKFNQNQPLAGKDVVLKVIRPDIEPIIKADIALMYRLASWIPRLSNDAKRLRATEVVREYEKTLLDELDLTREMANAIRLRNNFENSEMLYVPEMYQDFCHKNVIVMERIYGIPVSDVETLKANGTDMKLLAERGVQVFFTQVFRDSFFHADMHAGNIFVNPNHPENPQYIGIDCGIVGTLNQNDKRYLAESFVAFFNRDYRRVALMHVESGWTPPDTDIDAFEQAFREVCEPIFAKPLSEISFGHVLLNLFNVAREFNMEVQPQLVLLQKTLLYIEGLGRQVYPQLDLWQTAKPFLQNWLNEQVGVKAILRDLKQRAPQFREHFAEFPEAVFNALQQQKQINFRLDELNKTLQAQGRQKSHNVRSIVSGVIILGVLWRFDDLPLWLSCGTLVTVLLVLLLQRKS.

The 383-residue stretch at 123–505 (EFDEQALASA…GRQKSHNVRS (383 aa)) folds into the Protein kinase domain. ATP is bound by residues 129–137 (LASASIAQV) and K156. D291 (proton acceptor) is an active-site residue. Residues 522 to 540 (LPLWLSCGTLVTVLLVLLL) traverse the membrane as a helical segment.

The protein belongs to the ABC1 family. UbiB subfamily.

Its subcellular location is the cell inner membrane. It participates in cofactor biosynthesis; ubiquinone biosynthesis [regulation]. In terms of biological role, is probably a protein kinase regulator of UbiI activity which is involved in aerobic coenzyme Q (ubiquinone) biosynthesis. In Actinobacillus pleuropneumoniae serotype 5b (strain L20), this protein is Probable protein kinase UbiB.